A 143-amino-acid polypeptide reads, in one-letter code: Transcription antitermination protein NusB (143 aa).

The protein belongs to the NusB family.

Involved in transcription antitermination. Required for transcription of ribosomal RNA (rRNA) genes. Binds specifically to the boxA antiterminator sequence of the ribosomal RNA (rrn) operons. In Buchnera aphidicola subsp. Acyrthosiphon pisum (strain 5A), this protein is Transcription antitermination protein NusB.